Here is a 291-residue protein sequence, read N- to C-terminus: Inactive dihydropteroate synthase 2 (291 aa).

The Pterin-binding domain occupies 15–272; sequence QLIMAIVNRT…EVVATRRVLE (258 aa).

Belongs to the DHPS family. Homodimer.

Its function is as follows. Has very low affinity for the DHPS substrate 6-hydroxymethyl-7,8-dihydropterin-pyrophosphate, but can bind the inhibitor dapsone. Seems to lack dihydropteroate synthase activity, and does probably not function in folate metabolism. In Mycobacterium leprae (strain TN), this protein is Inactive dihydropteroate synthase 2 (folP2).